A 956-amino-acid polypeptide reads, in one-letter code: Zinc protease PQQL-like (956 aa).

The residue at position 1 (M1) is an N-acetylmethionine. A Zn(2+)-binding site is contributed by H85. The active-site Proton acceptor is E88. H89 contacts Zn(2+). The active site involves E165. E172 contributes to the Zn(2+) binding site.

This sequence belongs to the peptidase M16 family. Requires Zn(2+) as cofactor.

This chain is Zinc protease PQQL-like, found in Arabidopsis thaliana (Mouse-ear cress).